The sequence spans 887 residues: MAFNNLIRNLAIGDNVYKYFDLNGLNDARYNELPISIKYLLEAAVRHCDEFHVLKKDVETILDWKNSQRNQAEIPFKPARVILQDFTGVPAVVDLAAMRDAVQNMGADPAKINPVCPVDLVIDHSVQVDHYGNLEALAKNQSIEFERNRERFNFLKWGSKAFDNLLIVPPGSGIVHQVNLEYLARTVFVGKDGVLYPDSVVGTDSHTTMIDGSGVLGWGVGGIEAEAVMLGQPISMVIPEVIGYELVGTLSDTVTSTDLVLTITKNLRDLGVVGKFVEFFGTGVASLSIADRATIANMCPEYGATIGFFPVDSRTIDYLTQTGRDTDYTQRVEQYLKSVGMFVNFTDDSYRPTYTTTLKLDLGSVVPSVSGPKRPHDRVELASLAQDFSKGLTDKISFKAFGLKPEDATKSVTITNHGRTAELTHGSVVIAAITSCTNTSNPSVMLAAGLVAKKAVELGLNVQPYVKTSLSPGSGVVTKYLEASGLLPYLEKIGFNIAGYGCMTCIGNSGPLDEPVTKAIEENNLVVAGVLSGNRNFEGRIHPHVRANYLASPPLAVLYSIIGNVNVDINGVLAVTPDGKEIRLADIWPTRKEVAKFEEEFVKPQFFREVYANIELGSTEWQQLECPAVKLYPWDDASTYIKKVPFFDGMTSELPSQSDIVNAHVLLNLGDSVTTDHISPAGSISKTSPAARFLAGRGVTPRDFNTYGARRGNDEIMARGTFANIRLVNKLASKVGPITLHVPSGEELDIFDAAQKYKDAGIPAIILAGKEYGCGSSRDWAAKGPFLQGVKAVIAESFERIHRSNLIGMGIIPFQYQAGQNADSLGLTGKEQFSIGVPDDLKPGQLIDVNVSNGSVFQVICRFDTEVELTYYRNGGILQYMIRKLIQ.

Residues Q84 and 204-206 (DSH) each bind substrate. C436, C502, and C505 together coordinate [4Fe-4S] cluster. Substrate contacts are provided by residues R535, R540, R697, and 777-778 (SR).

It belongs to the aconitase/IPM isomerase family. Interacts with gex-3. The cofactor is [4Fe-4S] cluster.

It localises to the cytoplasm. Its subcellular location is the cytosol. The catalysed reaction is citrate = D-threo-isocitrate. Functionally, catalyzes the isomerization of citrate to isocitrate via cis-aconitate. Has probably no RNA-binding activity. The polypeptide is Cytoplasmic aconitate hydratase (aco-1) (Caenorhabditis elegans).